The primary structure comprises 329 residues: MSNKKLILKLFICSTIFITFVFALHDKRVVAASSVNELENWSKWMQPIPDNIPLARISIPGTHDSGTFKLQNPIKQVWGMTQEYDFRYQMDHGARIFDIRGRLTDDNTIVLHHGPLYLYVTLHEFINEAKQFLKDNPSETIIMSLKKEYEDMKGAEGSFSSTFEKNYFVDPIFLKTEGNIKLGDARGKIVLLKRYSGSNESGGYNNFYWPDNETFTTTVNQNVNVTVQDKYKVNYDEKVKSIKDTMDETMNNSEDLNHLYINFTSLSSGGTAWNSPYYYASYINPEIANDIKQKNPTRVGWVIQDYINEKWSPLLYQEVIRANKSLIKE.

The N-terminal stretch at 1-31 is a signal peptide; the sequence is MSNKKLILKLFICSTIFITFVFALHDKRVVA. One can recognise a PI-PLC X-box domain in the interval 51-194; sequence NIPLARISIP…ARGKIVLLKR (144 aa). H63 functions as the Proton acceptor in the catalytic mechanism. H113 (proton donor) is an active-site residue.

The protein localises to the secreted. It carries out the reaction a 1,2-diacyl-sn-glycero-3-phospho-(1D-myo-inositol) = 1D-myo-inositol 1,2-cyclic phosphate + a 1,2-diacyl-sn-glycerol. Cleaves glycosylphosphatidylinositol (GPI) and phosphatidylinositol (PI) anchors but not PI phosphates. The sequence is that of 1-phosphatidylinositol phosphodiesterase from Bacillus thuringiensis.